The primary structure comprises 462 residues: Asparagine--tRNA ligase (462 aa).

This sequence belongs to the class-II aminoacyl-tRNA synthetase family. Homodimer.

It localises to the cytoplasm. It catalyses the reaction tRNA(Asn) + L-asparagine + ATP = L-asparaginyl-tRNA(Asn) + AMP + diphosphate + H(+). The chain is Asparagine--tRNA ligase from Synechocystis sp. (strain ATCC 27184 / PCC 6803 / Kazusa).